A 339-amino-acid chain; its full sequence is MAKRHLTRRQSWRIEKIQEERAARAARRELRAVDELEGGDLGPEQTGQVIAHFGVQVEVESADGQVSRCHLRANLPALVTGDQVVWRAGNQGIGVIVAQLPRRSELCRPDMRGLLKPVAANVDRIVIVFAPRPEPHANLIDRYLIAAEHAGIQPLLLLNKADLVDESNAEGIDALLNVYRTLGYPLIEVSAFNGLAMDELRGALDGHVSVFVGQSGVGKSSLVNALLPGVDTRVGDLSTVTGKGTHTTTTARLFHFPGGGDLIDSPGIREFGLGHVSRDDVEAGFIEFRDLLGHCRFRDCKHDREPGCALLQALEDGRIMPQRMASYRHILASMPETDY.

The 161-residue stretch at 111-271 (MRGLLKPVAA…LIDSPGIREF (161 aa)) folds into the CP-type G domain. Residues 159–162 (NKAD) and 213–221 (GQSGVGKSS) contribute to the GTP site. Cys-295, Cys-300, His-302, and Cys-308 together coordinate Zn(2+).

This sequence belongs to the TRAFAC class YlqF/YawG GTPase family. RsgA subfamily. In terms of assembly, monomer. Associates with 30S ribosomal subunit, binds 16S rRNA. Requires Zn(2+) as cofactor.

The protein resides in the cytoplasm. One of several proteins that assist in the late maturation steps of the functional core of the 30S ribosomal subunit. Helps release RbfA from mature subunits. May play a role in the assembly of ribosomal proteins into the subunit. Circularly permuted GTPase that catalyzes slow GTP hydrolysis, GTPase activity is stimulated by the 30S ribosomal subunit. In Pseudomonas aeruginosa (strain UCBPP-PA14), this protein is Small ribosomal subunit biogenesis GTPase RsgA.